A 270-amino-acid polypeptide reads, in one-letter code: Expansin-B10 (270 aa).

Positions 1–31 (MAVNVRTMWSSMRAQVAMVVALVFLVRGAWC) are cleaved as a signal peptide. Asn41 carries an N-linked (GlcNAc...) asparagine glycan. The Expansin-like EG45 domain maps to 70 to 176 (GGGCGYKDVN…RRVKCKYDSK (107 aa)). 3 cysteine pairs are disulfide-bonded: Cys73-Cys101, Cys104-Cys171, and Cys109-Cys115. Residues 188–269 (NYLALLVKYV…NWKANTAYTA (82 aa)) form the Expansin-like CBD domain.

It belongs to the expansin family. Expansin B subfamily. Expressed in pollen.

The protein resides in the secreted. It localises to the cell wall. The protein localises to the membrane. Its function is as follows. May aid fertilization by loosening the cell wall of the stigma and style, thereby facilitating penetration of the pollen tube. Acts selectively on grass cell walls, which are relatively poor in pectins and xyloglucans and rich in glucuronoarabinoxylans and (1-3),(1-4)-beta-D-glucans, when compared with cell walls of other angiosperms, including other monocots. The chain is Expansin-B10 (EXPB10) from Zea mays (Maize).